A 246-amino-acid polypeptide reads, in one-letter code: Proteasome subunit alpha (246 aa).

Belongs to the peptidase T1A family. The 20S proteasome core is composed of 14 alpha and 14 beta subunits that assemble into four stacked heptameric rings, resulting in a barrel-shaped structure. The two inner rings, each composed of seven catalytic beta subunits, are sandwiched by two outer rings, each composed of seven alpha subunits. The catalytic chamber with the active sites is on the inside of the barrel. Has probably a gated structure, the ends of the cylinder being occluded by the N-termini of the alpha-subunits. Is likely capped at one or both ends by the proteasome regulatory ATPase, PAN.

Its subcellular location is the cytoplasm. Its activity is regulated as follows. The formation of the proteasomal ATPase PAN-20S proteasome complex, via the docking of the C-termini of PAN into the intersubunit pockets in the alpha-rings, triggers opening of the gate for substrate entry. Interconversion between the open-gate and close-gate conformations leads to a dynamic regulation of the 20S proteasome proteolysis activity. Its function is as follows. Component of the proteasome core, a large protease complex with broad specificity involved in protein degradation. This Archaeoglobus fulgidus (strain ATCC 49558 / DSM 4304 / JCM 9628 / NBRC 100126 / VC-16) protein is Proteasome subunit alpha.